The chain runs to 251 residues: Imidazole glycerol phosphate synthase subunit HisF (251 aa).

Catalysis depends on residues aspartate 10 and aspartate 129.

It belongs to the HisA/HisF family. Heterodimer of HisH and HisF.

It is found in the cytoplasm. The enzyme catalyses 5-[(5-phospho-1-deoxy-D-ribulos-1-ylimino)methylamino]-1-(5-phospho-beta-D-ribosyl)imidazole-4-carboxamide + L-glutamine = D-erythro-1-(imidazol-4-yl)glycerol 3-phosphate + 5-amino-1-(5-phospho-beta-D-ribosyl)imidazole-4-carboxamide + L-glutamate + H(+). The protein operates within amino-acid biosynthesis; L-histidine biosynthesis; L-histidine from 5-phospho-alpha-D-ribose 1-diphosphate: step 5/9. Its function is as follows. IGPS catalyzes the conversion of PRFAR and glutamine to IGP, AICAR and glutamate. The HisF subunit catalyzes the cyclization activity that produces IGP and AICAR from PRFAR using the ammonia provided by the HisH subunit. The protein is Imidazole glycerol phosphate synthase subunit HisF of Cutibacterium acnes (strain DSM 16379 / KPA171202) (Propionibacterium acnes).